The primary structure comprises 349 residues: Prostaglandin reductase 1 (349 aa).

Phosphothreonine is present on T18. S20 bears the Phosphoserine mark. NADP(+) is bound by residues 152 to 155 (GAVG), K178, Y193, N217, 239 to 245 (CGAISMY), 270 to 272 (FIF), and N321. Position 178 is an N6-(2-hydroxyisobutyryl)lysine; alternate (K178). K178 bears the N6-acetyllysine; alternate mark.

This sequence belongs to the NADP-dependent oxidoreductase L4BD family. Monomer or homodimer.

The protein localises to the cytoplasm. The enzyme catalyses 13,14-dihydro-15-oxo-prostaglandin E1 + NADP(+) = 15-oxoprostaglandin E1 + NADPH + H(+). It catalyses the reaction 13,14-dihydro-15-oxo-prostaglandin E2 + NADP(+) = 15-oxoprostaglandin E2 + NADPH + H(+). The catalysed reaction is 13,14-dihydro-15-oxo-prostaglandin F1alpha + NADP(+) = 15-oxoprostaglandin F1alpha + NADPH + H(+). It carries out the reaction 13,14-dihydro-15-oxo-PGF2alpha + NADP(+) = 15-oxoprostaglandin F2alpha + NADPH + H(+). The enzyme catalyses leukotriene B4 + NADP(+) = 12-oxo-leukotriene B4 + NADPH + H(+). It catalyses the reaction 20-hydroxy-leukotriene B4 + NADP(+) = 12-oxo-20-hydroxy-leukotriene B4 + NADPH + H(+). The catalysed reaction is 6-trans-leukotriene B4 + NADP(+) = 12-oxo-(5S)-hydroxy-(6E,8E,10E,14Z)-eicosatetraenoate + NADPH + H(+). It carries out the reaction (5S,12S)-dihydroxy-(6E,10E,12E,14Z)-eicosatetraenoate + NADP(+) = 12-oxo-(5S)-hydroxy-(6E,8E,10E,14Z)-eicosatetraenoate + NADPH + H(+). The enzyme catalyses an n-alkanal + NADP(+) = an alk-2-enal + NADPH + H(+). It catalyses the reaction hexanal + NADP(+) = (E)-hex-2-enal + NADPH + H(+). The catalysed reaction is octanal + NADP(+) = (2E)-octenal + NADPH + H(+). It carries out the reaction decanal + NADP(+) = (2E)-decenal + NADPH + H(+). The enzyme catalyses dodecanal + NADP(+) = (2E)-dodecenal + NADPH + H(+). It catalyses the reaction 4-hydroxynonanal + NADP(+) = (E)-4-hydroxynon-2-enal + NADPH + H(+). The catalysed reaction is pentan-2-one + NADP(+) = (E)-pent-3-en-2-one + NADPH + H(+). It carries out the reaction nonan-2-one + NADP(+) = (3E)-nonen-2-one + NADPH + H(+). Functionally, NAD(P)H-dependent oxidoreductase involved in metabolic inactivation of pro- and anti-inflammatory eicosanoids: prostaglandins (PG), leukotrienes (LT) and lipoxins (LX). Catalyzes with high efficiency the reduction of the 13,14 double bond of 15-oxoPGs, including 15-oxo-PGE1, 15-oxo-PGE2, 15-oxo-PGF1-alpha and 15-oxo-PGF2-alpha. Catalyzes with lower efficiency the oxidation of the hydroxyl group at C12 of LTB4 and its derivatives, converting them into biologically less active 12-oxo-LTB4 metabolites. Reduces 15-oxo-LXA4 to 13,14 dihydro-15-oxo-LXA4, enhancing neutrophil recruitment at the inflammatory site. Plays a role in metabolic detoxification of alkenals and ketones. Reduces alpha,beta-unsaturated alkenals and ketones, particularly those with medium-chain length, showing highest affinity toward (2E)-decenal and (3E)-3-nonen-2-one. May inactivate 4-hydroxy-2-nonenal, a cytotoxic lipid constituent of oxidized low-density lipoprotein particles. This chain is Prostaglandin reductase 1 (PTGR1), found in Oryctolagus cuniculus (Rabbit).